A 513-amino-acid chain; its full sequence is ATP synthase subunit alpha (513 aa).

Position 169-176 (169-176 (GDRQTGKT)) interacts with ATP.

The protein belongs to the ATPase alpha/beta chains family. In terms of assembly, F-type ATPases have 2 components, CF(1) - the catalytic core - and CF(0) - the membrane proton channel. CF(1) has five subunits: alpha(3), beta(3), gamma(1), delta(1), epsilon(1). CF(0) has three main subunits: a(1), b(2) and c(9-12). The alpha and beta chains form an alternating ring which encloses part of the gamma chain. CF(1) is attached to CF(0) by a central stalk formed by the gamma and epsilon chains, while a peripheral stalk is formed by the delta and b chains.

The protein localises to the cell inner membrane. The catalysed reaction is ATP + H2O + 4 H(+)(in) = ADP + phosphate + 5 H(+)(out). Produces ATP from ADP in the presence of a proton gradient across the membrane. The alpha chain is a regulatory subunit. This is ATP synthase subunit alpha from Haemophilus influenzae (strain PittEE).